A 1673-amino-acid polypeptide reads, in one-letter code: Protein TIC 214 (1673 aa).

6 helical membrane passes run 32-52 (AGLY…ILLI), 70-90 (LILG…YIAF), 93-113 (PYTL…GNNL), 130-150 (LEIL…TCIF), 170-190 (MVFL…VLMC), and 218-238 (FFLV…IQSL). Composition is skewed to basic and acidic residues over residues 264 to 276 (LKKS…GKST) and 283 to 298 (SHEK…SKLE). Disordered regions lie at residues 264-302 (LKKS…NEDE), 547-611 (VVFD…YSIR), 1120-1146 (NKQS…TDNL), and 1370-1433 (QQNQ…SEDD). Positions 562–586 (DNGNIQNNSSDKTINPQNNLTNLKP) are enriched in polar residues. Positions 597-611 (TTEKEPKDDKSYSIR) are enriched in basic and acidic residues. A compositionally biased stretch (polar residues) spans 1120-1135 (NKQSLQKRNSSGNSNL). The segment covering 1370 to 1379 (QQNQTTTKMN) has biased composition (low complexity). 2 stretches are compositionally biased toward basic and acidic residues: residues 1380 to 1399 (TETK…KKTE) and 1406 to 1423 (TKNK…KETE).

It belongs to the TIC214 family. As to quaternary structure, part of the Tic complex.

It is found in the plastid. The protein localises to the chloroplast inner membrane. Its function is as follows. Involved in protein precursor import into chloroplasts. May be part of an intermediate translocation complex acting as a protein-conducting channel at the inner envelope. The chain is Protein TIC 214 from Cuscuta gronovii (Common dodder).